Here is a 334-residue protein sequence, read N- to C-terminus: Ribosomal RNA small subunit methyltransferase H (334 aa).

S-adenosyl-L-methionine contacts are provided by residues 54–56 (GGH), Asp74, Phe100, Asp121, and Gln128. The tract at residues 272–318 (RHSKGQYPEDENLPMPPKRPRYFSKPKRVGPSKAEISNNPRSRSAWL) is disordered. A compositionally biased stretch (basic residues) spans 289 to 301 (KRPRYFSKPKRVG).

Belongs to the methyltransferase superfamily. RsmH family.

The protein resides in the cytoplasm. The catalysed reaction is cytidine(1402) in 16S rRNA + S-adenosyl-L-methionine = N(4)-methylcytidine(1402) in 16S rRNA + S-adenosyl-L-homocysteine + H(+). Its function is as follows. Specifically methylates the N4 position of cytidine in position 1402 (C1402) of 16S rRNA. This chain is Ribosomal RNA small subunit methyltransferase H, found in Psychrobacter arcticus (strain DSM 17307 / VKM B-2377 / 273-4).